The chain runs to 1168 residues: ATP-dependent DNA helicase mph1 (1168 aa).

Polar residues-rich tracts occupy residues 24–38 (NITSHHPSNSKQLAS) and 59–68 (PTVSQGQATA). The segment at 24 to 132 (NITSHHPSNS…PFRADMPPEQ (109 aa)) is disordered. The segment covering 71–88 (RAKTASKPTTSATTSRPS) has biased composition (low complexity). A compositionally biased stretch (polar residues) spans 89–104 (LAQSSQRKNLRQTTLW). The region spanning 162–330 (IVKNGLFNNT…DVIDNLGISH (169 aa)) is the Helicase ATP-binding domain. Residue 175–182 (LPTGLGKT) coordinates ATP. The DEAH box motif lies at 278–281 (DEAH). The region spanning 506 to 665 (LVNHFMDAGE…GSRFTFRHDL (160 aa)) is the Helicase C-terminal domain. 2 disordered regions span residues 690 to 717 (SQNPELPEPKRSAARMRTKPAKKKFNMP) and 830 to 1168 (APAN…DDQE). The span at 701 to 714 (SAARMRTKPAKKKF) shows a compositional bias: basic residues. The span at 895-907 (TAKTKSTGVSKQT) shows a compositional bias: polar residues. The segment covering 920–936 (DCEEGGNEYDGNVDDDE) has biased composition (acidic residues). Over residues 941 to 959 (RNFRSKGRGRGSGRGKKSQ) the composition is skewed to basic residues. Acidic residues predominate over residues 985–996 (GSDDGADLEDFI). Positions 1001 to 1030 (EVTSSLQHRPRGSTSPTTAPDAGSSSLSSK) are enriched in polar residues.

It belongs to the DEAD box helicase family. DEAH subfamily. FANCM sub-subfamily. As to quaternary structure, interacts with the MHF histone-fold complex to form the FANCM-MHF complex.

The protein localises to the nucleus. The enzyme catalyses ATP + H2O = ADP + phosphate + H(+). Functionally, ATP-dependent DNA helicase involved in DNA damage repair by homologous recombination and in genome maintenance. Capable of unwinding D-loops. Plays a role in limiting crossover recombinants during mitotic DNA double-strand break (DSB) repair. Component of a FANCM-MHF complex which promotes gene conversion at blocked replication forks, probably by reversal of the stalled fork. This Neurospora crassa (strain ATCC 24698 / 74-OR23-1A / CBS 708.71 / DSM 1257 / FGSC 987) protein is ATP-dependent DNA helicase mph1.